The primary structure comprises 653 residues: MLSQNPTTVAWWSVRMRATGTLDDEPYHVSGAESLVAPGMIEQTVAGLTQRALAPGHTVKARQVRVSLDQLDVEPTIIPALPTELKECPDPVAARQYFVDVLSRFVPHPAEALRVLTEGPTMRGAAMVEAGTDRRLEADPLRGVRVTKFGDLTESAPGASLAHKKHHHEAVLLASKVAAAPGVLAEFCISDDPHYTRGYVCVDGVYTTVTNVKADGDPNGGRVILVDTARADPTTITTWLENHPVLIGPATASSQKATSWHGHLCGRLNAWRAAGLERRPRTFCSAQDPDAVTTDGPALLFSSSDYLGLSTEPKVQQAMNNTVRRLGSSSGGSRLTTGTSVAHHQAEHEIAAWLGYPQAVFMASGYQANIATIQLLADPHVTVISDAENHASLIDGCRLARARTVVVPHADLDAIDTALDCVTTDRALVLTEGVYSMGGDVAPVGELVEIAHRHGALVVVDDAHGIGTVGPTGRGATEELPASQRPDVLLGTASKALGVEGGFACVDETLATLMRNCARGYVFSSAPSPVVAAGVAAAVEYLRTDTRRVCSLQANVAQARLLLAEADLIPPSAAHDRGPIIRIPVGPESRAVAAQEELARRGLMVGAIRYPAVARGDAILRICLTARHTDEHIRILVTSLREVLDGALSDAPR.

Arg278 provides a ligand contact to substrate. A pyridoxal 5'-phosphate-binding site is contributed by 365–366 (GY). Residue His390 participates in substrate binding. Residues Ser436, 461–464 (DDAH), and 492–495 (TASK) contribute to the pyridoxal 5'-phosphate site. Lys495 is subject to N6-(pyridoxal phosphate)lysine.

It in the N-terminal section; belongs to the BioW family. This sequence in the C-terminal section; belongs to the class-II pyridoxal-phosphate-dependent aminotransferase family. BioF subfamily. As to quaternary structure, homodimer. Requires Mg(2+) as cofactor. Pyridoxal 5'-phosphate serves as cofactor.

It carries out the reaction heptanedioate + ATP + CoA = 6-carboxyhexanoyl-CoA + AMP + diphosphate. The catalysed reaction is 6-carboxyhexanoyl-[ACP] + L-alanine + H(+) = (8S)-8-amino-7-oxononanoate + holo-[ACP] + CO2. The protein operates within metabolic intermediate metabolism; pimeloyl-CoA biosynthesis; pimeloyl-CoA from pimelate: step 1/1. It participates in cofactor biosynthesis; biotin biosynthesis. Functionally, catalyzes both the decarboxylative condensation of pimeloyl-[acyl-carrier protein] and L-alanine to produce 8-amino-7-oxononanoate (AON), [acyl-carrier protein], and carbon dioxide, and the transformation of pimelate into pimeloyl-CoA with concomitant hydrolysis of ATP to AMP. The chain is Biotin biosynthesis bifunctional protein BioWF from Cutibacterium acnes (strain DSM 16379 / KPA171202) (Propionibacterium acnes).